The chain runs to 136 residues: ATP synthase epsilon chain, chloroplastic (136 aa).

The protein belongs to the ATPase epsilon chain family. As to quaternary structure, F-type ATPases have 2 components, CF(1) - the catalytic core - and CF(0) - the membrane proton channel. CF(1) has five subunits: alpha(3), beta(3), gamma(1), delta(1), epsilon(1). CF(0) has three main subunits: a, b and c.

It localises to the plastid. Its subcellular location is the chloroplast thylakoid membrane. Produces ATP from ADP in the presence of a proton gradient across the membrane. This chain is ATP synthase epsilon chain, chloroplastic, found in Cucumis sativus (Cucumber).